The chain runs to 349 residues: Short chain dehydrogenase/reductase dpfgH (349 aa).

Residues 9–31 form a helical membrane-spanning segment; that stretch reads LCIRVVDSLYGSFLYLPLAILFL. Residues isoleucine 65, arginine 89, and aspartate 115 each contribute to the NADP(+) site. A glycan (N-linked (GlcNAc...) asparagine) is linked at asparagine 118. 2 residues coordinate NADP(+): asparagine 142 and lysine 164. Catalysis depends on proton donor residues serine 191 and serine 192. NADP(+) contacts are provided by tyrosine 223 and lysine 227. Catalysis depends on tyrosine 223, which acts as the Proton acceptor. The Lowers pKa of active site Tyr role is filled by lysine 227. Asparagine 334 carries N-linked (GlcNAc...) asparagine glycosylation.

It belongs to the short-chain dehydrogenases/reductases (SDR) family.

It is found in the membrane. The protein operates within secondary metabolite biosynthesis; terpenoid biosynthesis. In terms of biological role, short chain dehydrogenase/reductase; part of the gene cluster that mediates the biosynthesis of diterpenoid pyrones. The first step of the pathway is the synthesis of the alpha-pyrone moiety by the polyketide synthase dpfgA via condensation of one acetyl-CoA starter unit with 3 malonyl-CoA units and 2 methylations. The alpha-pyrone is then combined with geranylgeranyl pyrophosphate (GGPP) formed by the GGPP synthase dpfgD through the action of the prenyltransferase dpfgC to yield a linear alpha-pyrone diterpenoid. Subsequent steps in the diterpenoid pyrone biosynthetic pathway involve the decalin core formation, which is initiated by the epoxidation of the C10-C11 olefin by the FAD-dependent oxidoreductase dpfgE, and is followed by a cyclization cascade catalyzed by the terpene cyclase dpfgB. The short chain dehydrogenase/reductase dpfgG then oxidizes the 8S hydroxy group to a ketone and the short chain dehydrogenase/reductase dpfgH reduces the ketone to the 8R hydroxy group to yield higginsianin B. Higginsianin B is further methylated by the methyltransferase dpfgI to produce the intermediate named FDDP B. The cytochrome P450 monooxygenase dfgpJ then catalyzes a three-step oxidation at C-27 to generate a carboxylic acid as well as C-26 hydroxylation. Finally, methyltransferase dpfgK methylates the carboxylic acid generated by dpfgJ, yielding the final diterpenoid pyrones from the pathway which were named FDDP D and FDDP E. This chain is Short chain dehydrogenase/reductase dpfgH, found in Gibberella zeae (strain ATCC MYA-4620 / CBS 123657 / FGSC 9075 / NRRL 31084 / PH-1) (Wheat head blight fungus).